A 476-amino-acid polypeptide reads, in one-letter code: ATP synthase subunit beta, chloroplastic (476 aa).

Residue 155–162 (GGAGVGKT) coordinates ATP.

The protein belongs to the ATPase alpha/beta chains family. As to quaternary structure, F-type ATPases have 2 components, CF(1) - the catalytic core - and CF(0) - the membrane proton channel. CF(1) has five subunits: alpha(3), beta(3), gamma(1), delta(1), epsilon(1). CF(0) has four main subunits: a(1), b(1), b'(1) and c(9-12).

Its subcellular location is the plastid. It is found in the chloroplast thylakoid membrane. The catalysed reaction is ATP + H2O + 4 H(+)(in) = ADP + phosphate + 5 H(+)(out). Produces ATP from ADP in the presence of a proton gradient across the membrane. The catalytic sites are hosted primarily by the beta subunits. This chain is ATP synthase subunit beta, chloroplastic, found in Emiliania huxleyi (Coccolithophore).